The sequence spans 577 residues: Arginine--tRNA ligase (577 aa).

Residues 122–132 carry the 'HIGH' region motif; the sequence is PNVAKEMHVGH.

It belongs to the class-I aminoacyl-tRNA synthetase family. In terms of assembly, monomer.

It localises to the cytoplasm. The enzyme catalyses tRNA(Arg) + L-arginine + ATP = L-arginyl-tRNA(Arg) + AMP + diphosphate. The protein is Arginine--tRNA ligase (argS) of Salmonella typhimurium (strain SL1344).